Here is a 496-residue protein sequence, read N- to C-terminus: Probable cytosol aminopeptidase (496 aa).

Mn(2+)-binding residues include K262 and D267. K274 is a catalytic residue. D285, D344, and E346 together coordinate Mn(2+). R348 is an active-site residue.

The protein belongs to the peptidase M17 family. Mn(2+) is required as a cofactor.

The protein localises to the cytoplasm. It catalyses the reaction Release of an N-terminal amino acid, Xaa-|-Yaa-, in which Xaa is preferably Leu, but may be other amino acids including Pro although not Arg or Lys, and Yaa may be Pro. Amino acid amides and methyl esters are also readily hydrolyzed, but rates on arylamides are exceedingly low.. It carries out the reaction Release of an N-terminal amino acid, preferentially leucine, but not glutamic or aspartic acids.. In terms of biological role, presumably involved in the processing and regular turnover of intracellular proteins. Catalyzes the removal of unsubstituted N-terminal amino acids from various peptides. The polypeptide is Probable cytosol aminopeptidase (Rhizobium etli (strain CIAT 652)).